We begin with the raw amino-acid sequence, 544 residues long: Lysophosphatidylcholine acyltransferase 2 (544 aa).

The Cytoplasmic portion of the chain corresponds to 1-58 (MNRCAEAAAVAATVPGSGVGDSGLRPPMVPRQASFFPPPVPNPFVQQTRISAARRLQM). Residues 59–79 (ILLGIILLPVRALLVGLVLLL) form a helical; Signal-anchor for type II membrane protein membrane-spanning segment. Topologically, residues 80–544 (AWPFAVISTV…EEGTSGKKVD (465 aa)) are lumenal. The HXXXXD motif motif lies at 146–151 (HSTFFD). The short motif at 220–223 (EGTC) is the EGTC motif element. EF-hand domains lie at 391–426 (PVSD…LCNP) and 428–463 (NTED…SLGV). Residues Asp404, Asn406, Asp408, Ser410, Glu415, Asp441, Asp443, Asp445, Tyr447, and Glu452 each coordinate Ca(2+). The segment covering 520–530 (TAPSVASNKVS) has biased composition (polar residues). The tract at residues 520-544 (TAPSVASNKVSPESHEEGTSGKKVD) is disordered. The segment covering 531-544 (PESHEEGTSGKKVD) has biased composition (basic and acidic residues).

It belongs to the 1-acyl-sn-glycerol-3-phosphate acyltransferase family.

It localises to the endoplasmic reticulum membrane. Its subcellular location is the golgi apparatus membrane. The protein resides in the cell membrane. It is found in the lipid droplet. It carries out the reaction a 1-acyl-sn-glycero-3-phosphocholine + an acyl-CoA = a 1,2-diacyl-sn-glycero-3-phosphocholine + CoA. The enzyme catalyses a 1-O-alkyl-sn-glycero-3-phosphocholine + acetyl-CoA = a 1-O-alkyl-2-acetyl-sn-glycero-3-phosphocholine + CoA. It catalyses the reaction a 1-acyl-sn-glycero-3-phosphate + an acyl-CoA = a 1,2-diacyl-sn-glycero-3-phosphate + CoA. The catalysed reaction is a 1-O-(1Z-alkenyl)-sn-glycero-3-phosphocholine + an acyl-CoA = a 1-O-(1Z-alkenyl)-2-acyl-sn-glycero-3-phosphocholine + CoA. It carries out the reaction 1-hexadecanoyl-sn-glycero-3-phosphate + (9Z)-octadecenoyl-CoA = 1-hexadecanoyl-2-(9Z-octadecenoyl)-sn-glycero-3-phosphate + CoA. The enzyme catalyses 1-(9Z-octadecenoyl)-sn-glycero-3-phosphate + (9Z)-octadecenoyl-CoA = 1,2-di-(9Z-octadecenoyl)-sn-glycero-3-phosphate + CoA. It catalyses the reaction 1-(9Z-octadecenoyl)-sn-glycero-3-phosphate + hexadecanoyl-CoA = 1-(9Z)-octadecenoyl-2-hexadecanoyl-sn-glycero-3-phosphate + CoA. The catalysed reaction is 1-heptadecanoyl-sn-glycero-3-phosphate + (9Z)-octadecenoyl-CoA = 1-heptadecanoyl-2-(9Z)-octadecenoyl-sn-glycero-3-phosphate + CoA. It carries out the reaction 1-octadecanoyl-sn-glycero-3-phosphate + (9Z)-octadecenoyl-CoA = 1-octadecanoyl-2-(9Z-octadecenoyl)-sn-glycero-3-phosphate + CoA. The enzyme catalyses heptadecanoyl-CoA + 1-(9Z-octadecenoyl)-sn-glycero-3-phosphate = 1-(9Z)-octadecenoyl-2-heptadecanoyl-sn-glycero-3-phosphate + CoA. It catalyses the reaction 1-(9Z-octadecenoyl)-sn-glycero-3-phosphate + (9Z,12Z)-octadecadienoyl-CoA = 1-(9Z)-octadecenoyl-2-(9Z,12Z)-octadecadienoyl-sn-glycero-3-phosphate + CoA. The catalysed reaction is 1-(9Z-octadecenoyl)-sn-glycero-3-phosphate + tetradecanoyl-CoA = 1-(9Z)-octadecenoyl-2-tetradecanoyl-sn-glycero-3-phosphate + CoA. It carries out the reaction pentadecanoyl-CoA + 1-(9Z-octadecenoyl)-sn-glycero-3-phosphate = 1-(9Z)-octadecenoyl-2-pentadecanoyl-sn-glycero-3-phosphate + CoA. The enzyme catalyses nonadecanoyl-CoA + 1-(9Z-octadecenoyl)-sn-glycero-3-phosphate = 1-(9Z)-octadecenoyl-2-nonadecanoyl-sn-glycero-3-phosphate + CoA. It catalyses the reaction 1-hexadecanoyl-sn-glycero-3-phosphocholine + (9Z)-octadecenoyl-CoA = 1-hexadecanoyl-2-(9Z-octadecenoyl)-sn-glycero-3-phosphocholine + CoA. The catalysed reaction is 1-O-hexadecyl-sn-glycero-3-phosphocholine + acetyl-CoA = 1-O-hexadecyl-2-acetyl-sn-glycero-3-phosphocholine + CoA. It carries out the reaction 1-O-octadecyl-sn-glycero-3-phosphocholine + acetyl-CoA = 1-O-octadecyl-2-acetyl-sn-glycero-3-phosphocholine + CoA. The enzyme catalyses 1-hexadecanoyl-sn-glycero-3-phosphocholine + acetyl-CoA = 1-hexadecanoyl-2-acetyl-sn-glycero-3-phosphocholine + CoA. It catalyses the reaction 1-octadecanoyl-sn-glycero-3-phosphocholine + acetyl-CoA = 1-octadecanoyl-2-acetyl-sn-glycero-3-phosphocholine + CoA. The catalysed reaction is a 1-O-(1Z-alkenyl)-sn-glycero-3-phosphocholine + acetyl-CoA = 1-O-(1Z)-alkenyl-2-acetyl-sn-glycero-3-phosphocholine + CoA. It carries out the reaction 1-O-octadecyl-sn-glycero-3-phosphocholine + (5Z,8Z,11Z,14Z)-eicosatetraenoyl-CoA = 1-O-octadecyl-2-(5Z,8Z,11Z,14Z)-eicosatetraenoyl-sn-glycero-3-phosphocholine + CoA. Its pathway is lipid metabolism; phospholipid metabolism. Exhibits both acyltransferase and acetyltransferase activities. Activity is calcium-dependent. Catalyzes the conversion of lysophosphatidylcholine (1-acyl-sn-glycero-3-phosphocholine or LPC) into phosphatidylcholine (1,2-diacyl-sn-glycero-3-phosphocholine or PC). Catalyzes the conversion 1-acyl-sn-glycerol-3-phosphate (lysophosphatidic acid or LPA) into 1,2-diacyl-sn-glycerol-3-phosphate (phosphatidic acid or PA) by incorporating an acyl moiety at the sn-2 position of the glycerol backbone. Involved in platelet-activating factor (PAF) biosynthesis by catalyzing the conversion of the PAF precursor, 1-O-alkyl-sn-glycero-3-phosphocholine (lyso-PAF) into 1-O-alkyl-2-acetyl-sn-glycero-3-phosphocholine (PAF). Also converts lyso-PAF to 1-O-alkyl-2-acyl-sn-glycero-3-phosphocholine (PC), a major component of cell membranes and a PAF precursor. Under resting conditions, acyltransferase activity is preferred. Upon acute inflammatory stimulus, acetyltransferase activity is enhanced and PAF synthesis increases. Involved in the regulation of lipid droplet number and size. This is Lysophosphatidylcholine acyltransferase 2 (Lpcat2) from Rattus norvegicus (Rat).